Reading from the N-terminus, the 62-residue chain is MAKKAKGNRVQVILECTEMKDSGMPGTSRYITTKNRKNTTERLELKKYNPILKRVTVHKEIK.

This sequence belongs to the bacterial ribosomal protein bL33 family.

The sequence is that of Large ribosomal subunit protein bL33 from Phocaeicola vulgatus (strain ATCC 8482 / DSM 1447 / JCM 5826 / CCUG 4940 / NBRC 14291 / NCTC 11154) (Bacteroides vulgatus).